The primary structure comprises 123 residues: Small ribosomal subunit protein bS18 (123 aa).

Positions 1–10 (MADETTVSTP) are enriched in polar residues. Residues 1–52 (MADETTVSTPAASGTETPSTGGGGAPQGRPQGGPRGDRGPRPGGSGRDGGRK) form a disordered region. Over residues 20-34 (TGGGGAPQGRPQGGP) the composition is skewed to gly residues.

The protein belongs to the bacterial ribosomal protein bS18 family. Part of the 30S ribosomal subunit. Forms a tight heterodimer with protein bS6.

Functionally, binds as a heterodimer with protein bS6 to the central domain of the 16S rRNA, where it helps stabilize the platform of the 30S subunit. This chain is Small ribosomal subunit protein bS18, found in Koribacter versatilis (strain Ellin345).